Reading from the N-terminus, the 217-residue chain is NAD(P)H-quinone oxidoreductase subunit M, chloroplastic (217 aa).

The N-terminal 21 residues, 1–21 (MVAAFSYTACTKLSLLHPSMV), are a transit peptide targeting the chloroplast. The disordered stretch occupies residues 48-67 (ETETLKEEQSTEKMKKQPTP). The span at 50-62 (ETLKEEQSTEKMK) shows a compositional bias: basic and acidic residues.

This sequence belongs to the NDH complex subunit M family. As to quaternary structure, part of the chloroplast NDH complex, composed of a mixture of chloroplast and nucleus encoded subunits. Component of the NDH subcomplex A, at least composed of ndhH, ndhI, ndhJ, ndhK, ndhL, ndhM, ndhN and ndhO.

The protein localises to the plastid. The protein resides in the chloroplast thylakoid membrane. The enzyme catalyses a plastoquinone + NADH + (n+1) H(+)(in) = a plastoquinol + NAD(+) + n H(+)(out). The catalysed reaction is a plastoquinone + NADPH + (n+1) H(+)(in) = a plastoquinol + NADP(+) + n H(+)(out). In terms of biological role, NDH shuttles electrons from NAD(P)H:plastoquinone, via FMN and iron-sulfur (Fe-S) centers, to quinones in the photosynthetic chain and possibly in a chloroplast respiratory chain. The immediate electron acceptor for the enzyme in this species is believed to be plastoquinone. Couples the redox reaction to proton translocation, and thus conserves the redox energy in a proton gradient. This chain is NAD(P)H-quinone oxidoreductase subunit M, chloroplastic, found in Arabidopsis thaliana (Mouse-ear cress).